The sequence spans 412 residues: Serine hydroxymethyltransferase (412 aa).

(6S)-5,6,7,8-tetrahydrofolate-binding positions include Leu-117 and 121–123 (GHL). An N6-(pyridoxal phosphate)lysine modification is found at Lys-226.

It belongs to the SHMT family. Homodimer. Pyridoxal 5'-phosphate is required as a cofactor.

Its subcellular location is the cytoplasm. It catalyses the reaction (6R)-5,10-methylene-5,6,7,8-tetrahydrofolate + glycine + H2O = (6S)-5,6,7,8-tetrahydrofolate + L-serine. It participates in one-carbon metabolism; tetrahydrofolate interconversion. It functions in the pathway amino-acid biosynthesis; glycine biosynthesis; glycine from L-serine: step 1/1. In terms of biological role, catalyzes the reversible interconversion of serine and glycine with tetrahydrofolate (THF) serving as the one-carbon carrier. This reaction serves as the major source of one-carbon groups required for the biosynthesis of purines, thymidylate, methionine, and other important biomolecules. Also exhibits THF-independent aldolase activity toward beta-hydroxyamino acids, producing glycine and aldehydes, via a retro-aldol mechanism. This is Serine hydroxymethyltransferase from Staphylococcus aureus (strain bovine RF122 / ET3-1).